A 492-amino-acid chain; its full sequence is Zinc finger protein 385B (492 aa).

2 Matrin-type zinc fingers span residues 8 to 44 (KKLL…VKQL) and 143 to 173 (ISCN…KLKA). The tract at residues 159 to 206 (EAHYKGSKHAKKLKAQESPKNKQKSAVAQDSGTKTITSTSTNTTTTTT) is disordered. A compositionally biased stretch (low complexity) spans 189–206 (SGTKTITSTSTNTTTTTT). 2 Matrin-type zinc fingers span residues 303–337 (KKLL…LEAR) and 371–401 (FHCE…RVAG). Positions 388-420 (QHISSRRHKDRVAGKPTKPKYSPYNKQQRSSSS) are disordered.

The protein localises to the nucleus. In terms of biological role, may play a role in p53/TP53-mediated apoptosis. In Danio rerio (Zebrafish), this protein is Zinc finger protein 385B (znf385b).